An 871-amino-acid chain; its full sequence is Metabotropic glutamate receptor 6 (871 aa).

The signal sequence occupies residues M1–G23. The Extracellular portion of the chain corresponds to A24 to W579. A disulfide bridge links C51 with C93. L-glutamate is bound by residues S148, A169–T171, and Y219. 7 cysteine pairs are disulfide-bonded: C238-C530, C361-C377, C417-C424, C512-C531, C516-C534, C537-C549, and C552-C565. N290 carries N-linked (GlcNAc...) asparagine glycosylation. Position 301 (D301) interacts with L-glutamate. K394 contributes to the L-glutamate binding site. 2 N-linked (GlcNAc...) asparagine glycosylation sites follow: N445 and N473. N-linked (GlcNAc...) asparagine glycosylation is present at N561. The chain crosses the membrane as a helical span at residues A580 to M602. Residues R603–E616 lie on the Cytoplasmic side of the membrane. Residues L617 to A637 form a helical membrane-spanning segment. The Extracellular portion of the chain corresponds to E638 to R648. A helical transmembrane segment spans residues L649–N667. The Cytoplasmic portion of the chain corresponds to R668–Q691. The chain crosses the membrane as a helical span at residues L692–A712. Residues Q713–D742 lie on the Extracellular side of the membrane. Residues L743–I764 traverse the membrane as a helical segment. Over K765–K777 the chain is Cytoplasmic. A helical transmembrane segment spans residues P778–T800. The Extracellular portion of the chain corresponds to A801 to T813. Residues L814 to F839 traverse the membrane as a helical segment. The Cytoplasmic segment spans residues H840–K871. A disordered region spans residues R850–K871.

Belongs to the G-protein coupled receptor 3 family. In terms of assembly, homodimer. Interacts with GPR179. Interacts with photoreceptor synaptic protein LRIT1 (via its N-terminal extracellular domain). Restricted expression in the inner nuclear layer of the retina.

It is found in the cell membrane. The protein resides in the endoplasmic reticulum membrane. Its subcellular location is the golgi apparatus membrane. It localises to the cell projection. The protein localises to the dendrite. Functionally, G-protein coupled receptor for glutamate. Ligand binding causes a conformation change that triggers signaling via guanine nucleotide-binding proteins (G proteins) and modulates the activity of down-stream effectors, such as adenylate cyclase. Signaling inhibits adenylate cyclase activity. Signaling stimulates TRPM1 channel activity and Ca(2+) uptake. Required for normal vision. This chain is Metabotropic glutamate receptor 6 (Grm6), found in Rattus norvegicus (Rat).